A 248-amino-acid polypeptide reads, in one-letter code: Chromatin target of PRMT1 protein (248 aa).

N-acetylalanine is present on Ala2. 3 positions are modified to phosphoserine: Ser40, Ser49, and Ser64. Residue Lys70 forms a Glycyl lysine isopeptide (Lys-Gly) (interchain with G-Cter in SUMO2) linkage. Positions 151 to 204 (LRRGGVRGRGGPGRGGLGRGAMGRGGIGGRGRGMIGRGRGGFGGRGRGRGRGRG) are disordered. Residues 153–206 (RGGVRGRGGPGRGGLGRGAMGRGGIGGRGRGMIGRGRGGFGGRGRGRGRGRGAL) are interaction with PRMT1. The span at 157–195 (RGRGGPGRGGLGRGAMGRGGIGGRGRGMIGRGRGGFGGR) shows a compositional bias: gly residues. Positions 194–203 (GRGRGRGRGR) match the GAR motif; involved in 5hmC binding motif. Thr242 is subject to Phosphothreonine.

In terms of assembly, interacts with PRMT1 and PRMT5. Interacts with the 5FMC complex; the interaction is methylation-dependent. Interacts with FYTTD1, SET and PRC1 complex members CBX4, RNF2 and PHC2; the interactions are methylation-independent. Interacts with ZNF148. Interacts with WDR77 and ER. Asymmetrically methylated by PRMT1. Symmetrically methylated by PRMT5.

Its subcellular location is the nucleus. It is found in the nucleolus. The protein localises to the nucleoplasm. It localises to the nucleus speckle. In terms of biological role, plays an important role in the ligand-dependent activation of estrogen receptor target genes. May play a role in the silencing of fetal globin genes. Recruits the 5FMC complex to ZNF148, leading to desumoylation of ZNF148 and subsequent transactivation of ZNF148 target genes. Required for the tumorigenicity of glioblastoma cells. Binds to 5-hydroxymethylcytosine (5hmC) and associates with the methylosome complex containing PRMT1, PRMT5, MEP50 and ERH. The CHTOP-methylosome complex associated with 5hmC methylates H4R3 and transactivates genes involved in glioblastomagenesis. This chain is Chromatin target of PRMT1 protein (Chtop), found in Rattus norvegicus (Rat).